The sequence spans 588 residues: Pectinesterase 4 (588 aa).

Residues 1-24 form the signal peptide; that stretch reads MIGKVVVSVASILLIVGVAIGVVA. 3 N-linked (GlcNAc...) asparagine glycosylation sites follow: Asn-86, Asn-206, and Asn-342. Residues Thr-353 and Gln-383 each coordinate substrate. The Proton donor role is filled by Asp-406. Asp-427 serves as the catalytic Nucleophile. Residues Arg-496 and Trp-498 each coordinate substrate.

In the N-terminal section; belongs to the PMEI family. It in the C-terminal section; belongs to the pectinesterase family. Expressed in pollen grains and pollen tubes.

It localises to the secreted. The protein localises to the cell wall. The catalysed reaction is [(1-&gt;4)-alpha-D-galacturonosyl methyl ester](n) + n H2O = [(1-&gt;4)-alpha-D-galacturonosyl](n) + n methanol + n H(+). The protein operates within glycan metabolism; pectin degradation; 2-dehydro-3-deoxy-D-gluconate from pectin: step 1/5. Acts in the modification of cell walls via demethylesterification of cell wall pectin. Plays an important role in growth of pollen tubes in female floral tissues, possibly via enhancing the interaction between the pollen tube and female floral tissues by modification of the cell walls. The chain is Pectinesterase 4 (PME4) from Arabidopsis thaliana (Mouse-ear cress).